A 254-amino-acid chain; its full sequence is MQVQCQQSPVLAGSATLVALGALVLYVAKPSGYGKHTESLKPAATRLPARAAWFLQELPSFAVPAGILARQPLSLFGPPGTVLLGLFCVHYFHRTFVYSLLNRGRPYPAVLIFRGIAFCAGNGFLQSYYLIYCAEYPDGWYTDIRFCLGVFLFILGMGVNIHSDYILRQLRKPGEITYRIPKGGLFTYVSGANFLGEIIEWIGYALATWSLPALAFAFFSVCFLGLRAFHHHRFYLKMFEDYPKSRKALIPFIF.

4 helical membrane passes run 8–28 (SPVL…LYVA), 72–92 (PLSL…VHYF), 146–166 (FCLG…SDYI), and 206–226 (LATW…FLGL).

This sequence belongs to the steroid 5-alpha reductase family.

It localises to the microsome membrane. Its subcellular location is the endoplasmic reticulum membrane. It catalyses the reaction a 3-oxo-5alpha-steroid + NADP(+) = a 3-oxo-Delta(4)-steroid + NADPH + H(+). The enzyme catalyses 17beta-hydroxy-5alpha-androstan-3-one + NADP(+) = testosterone + NADPH + H(+). The catalysed reaction is 5alpha-pregnane-3,20-dione + NADP(+) = progesterone + NADPH + H(+). Converts testosterone (T) into 5-alpha-dihydrotestosterone (DHT) and progesterone or corticosterone into their corresponding 5-alpha-3-oxosteroids. It plays a central role in sexual differentiation and androgen physiology. The chain is 3-oxo-5-alpha-steroid 4-dehydrogenase 2 (SRD5A2) from Macaca fascicularis (Crab-eating macaque).